Here is a 386-residue protein sequence, read N- to C-terminus: Succinate--CoA ligase [ADP-forming] subunit beta (386 aa).

The ATP-grasp domain occupies 9–244; the sequence is KEILRKYGVP…HDEEDPLETR (236 aa). Residues lysine 46, 53 to 55, glutamate 99, cysteine 102, and glutamate 107 contribute to the ATP site; that span reads GRG. The Mg(2+) site is built by asparagine 199 and aspartate 213. Substrate contacts are provided by residues asparagine 264 and 321-323; that span reads GIM.

Belongs to the succinate/malate CoA ligase beta subunit family. In terms of assembly, heterotetramer of two alpha and two beta subunits. Requires Mg(2+) as cofactor.

The enzyme catalyses succinate + ATP + CoA = succinyl-CoA + ADP + phosphate. It carries out the reaction GTP + succinate + CoA = succinyl-CoA + GDP + phosphate. It functions in the pathway carbohydrate metabolism; tricarboxylic acid cycle; succinate from succinyl-CoA (ligase route): step 1/1. In terms of biological role, succinyl-CoA synthetase functions in the citric acid cycle (TCA), coupling the hydrolysis of succinyl-CoA to the synthesis of either ATP or GTP and thus represents the only step of substrate-level phosphorylation in the TCA. The beta subunit provides nucleotide specificity of the enzyme and binds the substrate succinate, while the binding sites for coenzyme A and phosphate are found in the alpha subunit. This Rickettsia rickettsii (strain Iowa) protein is Succinate--CoA ligase [ADP-forming] subunit beta.